The chain runs to 363 residues: 3-isopropylmalate dehydrogenase (363 aa).

Residue 78 to 91 (GKKWDDLPINQRPE) participates in NAD(+) binding. Residues arginine 99, arginine 109, arginine 138, and aspartate 227 each contribute to the substrate site. Positions 227, 251, and 255 each coordinate Mg(2+). Residue 285–297 (GSAPDIEGKNIAN) coordinates NAD(+).

Belongs to the isocitrate and isopropylmalate dehydrogenases family. LeuB type 1 subfamily. As to quaternary structure, homodimer. The cofactor is Mg(2+). Requires Mn(2+) as cofactor.

The protein resides in the cytoplasm. The catalysed reaction is (2R,3S)-3-isopropylmalate + NAD(+) = 4-methyl-2-oxopentanoate + CO2 + NADH. It functions in the pathway amino-acid biosynthesis; L-leucine biosynthesis; L-leucine from 3-methyl-2-oxobutanoate: step 3/4. Catalyzes the oxidation of 3-carboxy-2-hydroxy-4-methylpentanoate (3-isopropylmalate) to 3-carboxy-4-methyl-2-oxopentanoate. The product decarboxylates to 4-methyl-2 oxopentanoate. The chain is 3-isopropylmalate dehydrogenase from Buchnera aphidicola subsp. Uroleucon rudbeckiae.